The sequence spans 206 residues: Ras-related protein Rab7 (206 aa).

Residues 15 to 22 (GDSGVGKT), 63 to 67 (DTAGQ), and 125 to 128 (NKID) each bind GTP. S-geranylgeranyl cysteine attachment occurs at residues Cys204 and Cys206. Cys206 carries the cysteine methyl ester modification.

Belongs to the small GTPase superfamily. Rab family.

The protein resides in the cell membrane. Functionally, protein transport. Probably involved in vesicular traffic. This chain is Ras-related protein Rab7, found in Pisum sativum (Garden pea).